The sequence spans 882 residues: Ion channel DMI1 (882 aa).

The tract at residues 1–122 is disordered; the sequence is MAKSNEESSN…PSSSSITKQQ (122 aa). Residues 48-62 show a composition bias toward polar residues; the sequence is TSTTKTDFSEQQWNY. Over residues 78–95 the composition is skewed to pro residues; the sequence is PPPPPSKPPVNLIPPHPR. Over residues 107–117 the composition is skewed to low complexity; it reads SSLLPQPSSSS. Helical transmembrane passes span 129–149, 192–212, 255–275, and 307–327; these read SPIF…SAYL, TIAL…YKYL, LALL…LYAV, and IVSV…LGLV. 2 consecutive RCK N-terminal domains span residues 348–489 and 608–757; these read RNHV…ETVV and PEKI…DKSI. Residues 378–403 adopt a coiled-coil conformation; sequence VIVVLAEKEKEEMEMDIAKLEFDFMG.

It belongs to the castor/pollux (TC 1.A.1.23) family. Interacts (via c-terminus) with CNGC15A, CNGC15B and CNGC15C (via N-terminus). The Nod factor has no effect on these interactions, implying that the complex is maintained after activation. In terms of tissue distribution, mainly expressed in roots and nodules. Also detected in pods, flowers, leaves, and stems.

It localises to the nucleus membrane. Functionally, required for early signal transduction events leading to endosymbiosis. Acts early in a signal transduction chain leading from the perception of Nod factor to the activation of calcium spiking. Also involved in mycorrhizal symbiosis. May be involved in the regulation of the calcium channel responsible for calcium spiking by mobilizing another cation, and thereby altering the membrane potential. In Medicago truncatula (Barrel medic), this protein is Ion channel DMI1.